Consider the following 657-residue polypeptide: Probable potassium transport system protein Kup (657 aa).

12 helical membrane passes run 14 to 34 (IGGL…SPLY), 47 to 67 (ADIV…QTTI), 96 to 116 (IQWL…DGII), 140 to 160 (TIVY…QFGT), 166 to 186 (FFAP…FIQI), 201 to 221 (AYHL…VFLC), 242 to 262 (ISWI…AAYL), 283 to 303 (LIMP…AAVI), 340 to 360 (LYIP…VLHF), 371 to 391 (GLAI…YLIM), 396 to 416 (LYFM…FLIA), and 425 to 445 (GYVT…WYLA).

It belongs to the HAK/KUP transporter (TC 2.A.72) family.

The protein localises to the cell inner membrane. It carries out the reaction K(+)(in) + H(+)(in) = K(+)(out) + H(+)(out). Transport of potassium into the cell. Likely operates as a K(+):H(+) symporter. In Flavobacterium johnsoniae (strain ATCC 17061 / DSM 2064 / JCM 8514 / BCRC 14874 / CCUG 350202 / NBRC 14942 / NCIMB 11054 / UW101) (Cytophaga johnsonae), this protein is Probable potassium transport system protein Kup.